We begin with the raw amino-acid sequence, 231 residues long: Protein PIMREG (231 aa).

A disordered region spans residues 1–44 (MASQWQGMRTSVRRRSLLKEEQLEKKEVTRSAGGHPETGPLGSL). 2 positions are modified to phosphoserine: serine 11 and serine 16. 2 short sequence motifs (D-box) span residues 14-17 (RRSL) and 53-56 (PLRA). A compositionally biased stretch (basic and acidic residues) spans 17-29 (LLKEEQLEKKEVT). Serine 72 is subject to Phosphoserine. Disordered stretches follow at residues 115–138 (KVRR…QKNT) and 152–197 (HLRL…DLEP). Serine 128 is modified (phosphoserine; by Uhmk1; in vitro). The segment covering 178–190 (PCSSTEPLCSPSE) has biased composition (polar residues). Phosphoserine is present on residues serine 191 and serine 193.

Interacts with PICALM; this interaction may target PICALM to the nucleus. During mitosis, associates with HDAC2 and MTA2 subunits of the chromatin-remodeling NuRD complex; this association is strongest at prometaphase and decreases as the cell progresses through metaphase and anaphase. Ubiquitinated by the anaphase-promoting complex/cyclosome (APC/C) complex in the presence of FZR1, leading to its degradation by the proteasome during mitotic exit. However, degradation is not essential for normal mitotic progression within a single cell cycle. As to expression, mainly expressed in thymus and ovary. Expressed in all T-cell subpopulations isolated from the thymus, macrophages, pro-erythrocytes, granulocytes, mast cells and progenitor cells.

Its subcellular location is the nucleus. It is found in the nucleolus. In terms of biological role, during mitosis, may play a role in the metaphase-to-anaphase transition. The sequence is that of Protein PIMREG from Mus musculus (Mouse).